The following is a 279-amino-acid chain: Tryptophan synthase alpha chain (279 aa).

Residues Glu50 and Asp61 each act as proton acceptor in the active site.

It belongs to the TrpA family. As to quaternary structure, tetramer of two alpha and two beta chains.

The enzyme catalyses (1S,2R)-1-C-(indol-3-yl)glycerol 3-phosphate + L-serine = D-glyceraldehyde 3-phosphate + L-tryptophan + H2O. The protein operates within amino-acid biosynthesis; L-tryptophan biosynthesis; L-tryptophan from chorismate: step 5/5. The alpha subunit is responsible for the aldol cleavage of indoleglycerol phosphate to indole and glyceraldehyde 3-phosphate. The chain is Tryptophan synthase alpha chain from Brucella suis biovar 1 (strain 1330).